The following is a 76-amino-acid chain: Conotoxin Im6.9 (76 aa).

Residues 1–19 (MEKLTILLLVTAVLMSTQA) form the signal peptide. Residues 20-45 (LMQSGIEKRQRAKIKFFSKRKTTAER) constitute a propeptide that is removed on maturation. Cystine bridges form between cysteine 51/cysteine 65, cysteine 58/cysteine 69, and cysteine 64/cysteine 73.

Belongs to the conotoxin O2 superfamily. As to expression, expressed by the venom duct.

The protein resides in the secreted. Probable neurotoxin. In Conus imperialis (Imperial cone), this protein is Conotoxin Im6.9.